The primary structure comprises 207 residues: MARCKS-related protein 1-B (207 aa).

Low complexity-rich tracts occupy residues 1-25 and 63-77; these read MGSQASKGGVAVEGKAAAADPAAVK and AGAGDAIEPAPAAEG. The disordered stretch occupies residues 1-207; sequence MGSQASKGGV…STPAPSEQKE (207 aa). A lipid anchor (N-myristoyl glycine) is attached at Gly2. Basic and acidic residues predominate over residues 78–90; sequence EAAKPEGEATKET. The interval 93-116 is effector domain involved in lipid-binding; that stretch reads KKKKKFSLKNSFKFKGISLKKSKK. Positions 100 to 109 are enriched in low complexity; it reads LKNSFKFKGI. Basic and acidic residues-rich tracts occupy residues 131–154 and 163–182; these read TEEKPEENGAATEEKKEEEAKAEE and PKAEEPAAKAEEPAAAKEEA. The segment covering 195-207 has biased composition (polar residues); sequence ETNSTPAPSEQKE.

Belongs to the MARCKS family. In terms of tissue distribution, strongly expressed in brain and eye. Also detected at lower levels in muscle.

It is found in the cytoplasm. The protein localises to the cytoskeleton. The protein resides in the cell membrane. In terms of biological role, involved in the control of cell movement by regulating actin cytoskeleton homeostasis and filopodium and lamellipodium formation. This is MARCKS-related protein 1-B from Danio rerio (Zebrafish).